Reading from the N-terminus, the 562-residue chain is Arginine--tRNA ligase (562 aa).

A 'HIGH' region motif is present at residues 129-139 (ANPTGPLHVGH).

This sequence belongs to the class-I aminoacyl-tRNA synthetase family. Monomer.

The protein resides in the cytoplasm. The enzyme catalyses tRNA(Arg) + L-arginine + ATP = L-arginyl-tRNA(Arg) + AMP + diphosphate. This chain is Arginine--tRNA ligase, found in Xanthomonas oryzae pv. oryzae (strain MAFF 311018).